The following is a 373-amino-acid chain: NAD-dependent protein deacylase SRT2 (373 aa).

The transit peptide at 1 to 47 directs the protein to the mitochondrion; the sequence is MNMRRVFGGVSTDLFPSRSMYRPLQSGGNLVMLFKGCRRFVRTTCRV. The 299-residue stretch at 75–373 folds into the Deacetylase sirtuin-type domain; sequence DPPNMEDIHK…DVGSLSVPAL (299 aa). NAD(+)-binding positions include 100 to 120 and 179 to 182; these read GAGV…GAYS and QNVD. His-196 acts as the Proton acceptor in catalysis. Zn(2+) is bound by residues Cys-204, Cys-207, Cys-271, and Cys-274. NAD(+) is bound by residues 311 to 313, 337 to 339, and Val-355; these read GSS and NIG.

It belongs to the sirtuin family. Class II subfamily. Binds to the promoter region of genes influenced by ethylene. Interacts with ENAP1; this interaction is enhanced in the presence of ethylene. Zn(2+) serves as cofactor.

The protein resides in the mitochondrion matrix. The protein localises to the nucleus. The catalysed reaction is N(6)-acetyl-L-lysyl-[protein] + NAD(+) + H2O = 2''-O-acetyl-ADP-D-ribose + nicotinamide + L-lysyl-[protein]. In terms of biological role, NAD-dependent protein deacylase. Catalyzes the NAD-dependent hydrolysis of acyl groups from lysine residues. Involved in responses to ethylene leading to the transcriptional repression of some ethylene-responsive genes via the regulation of histone acetylation H3K9Ac. Negatively regulates plant basal defense against plant pathogens, possibly by suppressing salicylic acid biosynthesis. This chain is NAD-dependent protein deacylase SRT2, found in Arabidopsis thaliana (Mouse-ear cress).